The following is a 373-amino-acid chain: Alanine dehydrogenase (373 aa).

2 residues coordinate substrate: Arg15 and Lys74. Residue His95 is the Proton donor/acceptor of the active site. Residues Ser133, Gln177–Ala178, Asp197, Ser219, Val238–Leu239, Ile266–Asp269, and Val298–Met301 each bind NAD(+). The Proton donor/acceptor role is filled by Asp269.

It belongs to the AlaDH/PNT family. Homohexamer. Trimer of dimer.

The enzyme catalyses L-alanine + NAD(+) + H2O = pyruvate + NH4(+) + NADH + H(+). It participates in amino-acid degradation; L-alanine degradation via dehydrogenase pathway; NH(3) and pyruvate from L-alanine: step 1/1. Functionally, catalyzes the reversible reductive amination of pyruvate to L-alanine. May play a role in cell wall synthesis as L-alanine is an important constituent of the peptidoglycan layer. In Staphylococcus haemolyticus (strain JCSC1435), this protein is Alanine dehydrogenase (ald).